Here is a 238-residue protein sequence, read N- to C-terminus: tRNA1(Val) (adenine(37)-N6)-methyltransferase (238 aa).

It belongs to the methyltransferase superfamily. tRNA (adenine-N(6)-)-methyltransferase family.

It is found in the cytoplasm. It carries out the reaction adenosine(37) in tRNA1(Val) + S-adenosyl-L-methionine = N(6)-methyladenosine(37) in tRNA1(Val) + S-adenosyl-L-homocysteine + H(+). In terms of biological role, specifically methylates the adenine in position 37 of tRNA(1)(Val) (anticodon cmo5UAC). This chain is tRNA1(Val) (adenine(37)-N6)-methyltransferase, found in Shewanella baltica (strain OS195).